The chain runs to 1551 residues: Pentafunctional AROM polypeptide 1 (1551 aa).

Positions 1 to 379 (MSIEKVSILG…YESKAHQIFK (379 aa)) are 3-dehydroquinate synthase. Residues 42 to 44 (DTN), 80 to 83 (ENHK), 111 to 113 (GGV), and Asp-116 each bind NAD(+). Arg-127 provides a ligand contact to 7-phospho-2-dehydro-3-deoxy-D-arabino-heptonate. 136 to 137 (TT) lines the NAD(+) pocket. Positions 143 and 149 each coordinate 7-phospho-2-dehydro-3-deoxy-D-arabino-heptonate. Lys-158 serves as a coordination point for NAD(+). Asn-159 lines the 7-phospho-2-dehydro-3-deoxy-D-arabino-heptonate pocket. Residues 176-179 (FLQT) and Asn-187 each bind NAD(+). A Zn(2+)-binding site is contributed by Glu-191. Residues 191 to 194 (EVVK) and Lys-243 each bind 7-phospho-2-dehydro-3-deoxy-D-arabino-heptonate. Glu-253 (proton acceptor; for 3-dehydroquinate synthase activity) is an active-site residue. 7-phospho-2-dehydro-3-deoxy-D-arabino-heptonate contacts are provided by residues 257 to 261 (RNLLN) and His-264. A Zn(2+)-binding site is contributed by His-264. Catalysis depends on His-268, which acts as the Proton acceptor; for 3-dehydroquinate synthase activity. His-280 and Lys-351 together coordinate 7-phospho-2-dehydro-3-deoxy-D-arabino-heptonate. His-280 contributes to the Zn(2+) binding site. Residues 392–835 (VHPFANRHPE…WDVLHSKFNA (444 aa)) are EPSP synthase. The segment at 854–1044 (DRSIVIIGMR…LPATRSTFVT (191 aa)) is shikimate kinase. Residue 861-868 (GMRAAGKT) coordinates ATP. Positions 1045–1258 (LTYPDLRKVP…IGVGQLSLKE (214 aa)) are 3-dehydroquinase. The active-site Proton acceptor; for 3-dehydroquinate dehydratase activity is His-1162. Lys-1191 serves as the catalytic Schiff-base intermediate with substrate; for 3-dehydroquinate dehydratase activity. The tract at residues 1271 to 1551 (EKEFWVVGSP…KVIHSAVLNE (281 aa)) is shikimate dehydrogenase.

In the N-terminal section; belongs to the sugar phosphate cyclases superfamily. Dehydroquinate synthase family. It in the 2nd section; belongs to the EPSP synthase family. The protein in the 3rd section; belongs to the shikimate kinase family. This sequence in the 4th section; belongs to the type-I 3-dehydroquinase family. In the C-terminal section; belongs to the shikimate dehydrogenase family. Homodimer. It depends on Zn(2+) as a cofactor.

Its subcellular location is the cytoplasm. The enzyme catalyses 7-phospho-2-dehydro-3-deoxy-D-arabino-heptonate = 3-dehydroquinate + phosphate. It carries out the reaction 3-dehydroquinate = 3-dehydroshikimate + H2O. It catalyses the reaction shikimate + NADP(+) = 3-dehydroshikimate + NADPH + H(+). The catalysed reaction is shikimate + ATP = 3-phosphoshikimate + ADP + H(+). The enzyme catalyses 3-phosphoshikimate + phosphoenolpyruvate = 5-O-(1-carboxyvinyl)-3-phosphoshikimate + phosphate. It functions in the pathway metabolic intermediate biosynthesis; chorismate biosynthesis; chorismate from D-erythrose 4-phosphate and phosphoenolpyruvate: step 2/7. It participates in metabolic intermediate biosynthesis; chorismate biosynthesis; chorismate from D-erythrose 4-phosphate and phosphoenolpyruvate: step 3/7. The protein operates within metabolic intermediate biosynthesis; chorismate biosynthesis; chorismate from D-erythrose 4-phosphate and phosphoenolpyruvate: step 4/7. Its pathway is metabolic intermediate biosynthesis; chorismate biosynthesis; chorismate from D-erythrose 4-phosphate and phosphoenolpyruvate: step 5/7. It functions in the pathway metabolic intermediate biosynthesis; chorismate biosynthesis; chorismate from D-erythrose 4-phosphate and phosphoenolpyruvate: step 6/7. The AROM polypeptide catalyzes 5 consecutive enzymatic reactions in prechorismate polyaromatic amino acid biosynthesis. This Lodderomyces elongisporus (strain ATCC 11503 / CBS 2605 / JCM 1781 / NBRC 1676 / NRRL YB-4239) (Yeast) protein is Pentafunctional AROM polypeptide 1.